The following is a 156-amino-acid chain: MINISMLISNSEVSGPGGLFDFNATLPLVAIQFILLMVLLNILLYNPLLTIIEERKEYILTNLGKASELLSEANKLTQQYEQELDNVRKEAQLEITNSQKIHKEILEVELNISQKYIDNLLDTIQKDLLAKKNIALNSLDEIVQSLCVDIEARLSI.

Residues 24 to 44 form a helical membrane-spanning segment; that stretch reads ATLPLVAIQFILLMVLLNILL.

The protein belongs to the ATPase B chain family. In terms of assembly, F-type ATPases have 2 components, F(1) - the catalytic core - and F(0) - the membrane proton channel. F(1) has five subunits: alpha(3), beta(3), gamma(1), delta(1), epsilon(1). F(0) has four main subunits: a(1), b(1), b'(1) and c(10-14). The alpha and beta chains form an alternating ring which encloses part of the gamma chain. F(1) is attached to F(0) by a central stalk formed by the gamma and epsilon chains, while a peripheral stalk is formed by the delta, b and b' chains.

The protein localises to the plastid. The protein resides in the chloroplast thylakoid membrane. Functionally, f(1)F(0) ATP synthase produces ATP from ADP in the presence of a proton or sodium gradient. F-type ATPases consist of two structural domains, F(1) containing the extramembraneous catalytic core and F(0) containing the membrane proton channel, linked together by a central stalk and a peripheral stalk. During catalysis, ATP synthesis in the catalytic domain of F(1) is coupled via a rotary mechanism of the central stalk subunits to proton translocation. Its function is as follows. Component of the F(0) channel, it forms part of the peripheral stalk, linking F(1) to F(0). The b'-subunit is a diverged and duplicated form of b found in plants and photosynthetic bacteria. The sequence is that of ATP synthase subunit b', chloroplastic from Phaeodactylum tricornutum (strain CCAP 1055/1).